Consider the following 486-residue polypeptide: Betaine aldehyde dehydrogenase (486 aa).

K(+)-binding residues include Thr23 and Asp90. Position 147-149 (147-149) interacts with NAD(+); the sequence is GAW. Residue Lys159 is the Charge relay system of the active site. Residues 173 to 176 and 226 to 229 contribute to the NAD(+) site; these read KPSE and ESGT. Residue Leu241 participates in K(+) binding. Glu247 serves as the catalytic Proton acceptor. Positions 249, 281, and 382 each coordinate NAD(+). The Nucleophile role is filled by Cys281. Cys281 carries the cysteine sulfenic acid (-SOH) modification. 2 residues coordinate K(+): Lys452 and Gly455. Glu459 serves as the catalytic Charge relay system.

This sequence belongs to the aldehyde dehydrogenase family. As to quaternary structure, dimer of dimers. The cofactor is K(+).

The enzyme catalyses betaine aldehyde + NAD(+) + H2O = glycine betaine + NADH + 2 H(+). Its pathway is amine and polyamine biosynthesis; betaine biosynthesis via choline pathway; betaine from betaine aldehyde: step 1/1. In terms of biological role, involved in the biosynthesis of the osmoprotectant glycine betaine. Catalyzes the irreversible oxidation of betaine aldehyde to the corresponding acid. This chain is Betaine aldehyde dehydrogenase, found in Vibrio parahaemolyticus serotype O3:K6 (strain RIMD 2210633).